Reading from the N-terminus, the 357-residue chain is EGF-like domain-containing protein 2 (357 aa).

The signal sequence occupies residues 1 to 20; the sequence is MPPSLSHLFLLSTFASLALC. EGF-like domains lie at 21-55 and 61-93; these read SFYC…FNCG and ISAA…PTCQ. 6 disulfides stabilise this stretch: cysteine 24–cysteine 37, cysteine 31–cysteine 43, cysteine 45–cysteine 54, cysteine 65–cysteine 75, cysteine 69–cysteine 81, and cysteine 83–cysteine 92.

Prismatic layer of shell (at protein level). Expressed primarily in the mantle with highest level in the mantle edge and lower level in the mantle pallium.

The protein localises to the secreted. The polypeptide is EGF-like domain-containing protein 2 (Pinctada maxima (Silver-lipped pearl oyster)).